Here is a 137-residue protein sequence, read N- to C-terminus: Nucleoside diphosphate kinase (137 aa).

ATP contacts are provided by Lys9, Phe57, Arg85, Thr91, Arg102, and Asn112. The Pros-phosphohistidine intermediate role is filled by His115.

Belongs to the NDK family. As to quaternary structure, homotetramer. Mg(2+) is required as a cofactor.

Its subcellular location is the cytoplasm. It catalyses the reaction a 2'-deoxyribonucleoside 5'-diphosphate + ATP = a 2'-deoxyribonucleoside 5'-triphosphate + ADP. The enzyme catalyses a ribonucleoside 5'-diphosphate + ATP = a ribonucleoside 5'-triphosphate + ADP. In terms of biological role, major role in the synthesis of nucleoside triphosphates other than ATP. The ATP gamma phosphate is transferred to the NDP beta phosphate via a ping-pong mechanism, using a phosphorylated active-site intermediate. This chain is Nucleoside diphosphate kinase, found in Nitratiruptor sp. (strain SB155-2).